We begin with the raw amino-acid sequence, 272 residues long: Formamidopyrimidine-DNA glycosylase (272 aa).

The active-site Schiff-base intermediate with DNA is proline 2. Catalysis depends on glutamate 3, which acts as the Proton donor. The active-site Proton donor; for beta-elimination activity is lysine 58. DNA is bound by residues histidine 92, arginine 111, and arginine 153. The segment at 238–272 (AVYGRQGQSCPRCGGLVERCRLGQRSTFFCPACQR) adopts an FPG-type zinc-finger fold. The Proton donor; for delta-elimination activity role is filled by arginine 262.

It belongs to the FPG family. In terms of assembly, monomer. Requires Zn(2+) as cofactor.

It catalyses the reaction Hydrolysis of DNA containing ring-opened 7-methylguanine residues, releasing 2,6-diamino-4-hydroxy-5-(N-methyl)formamidopyrimidine.. It carries out the reaction 2'-deoxyribonucleotide-(2'-deoxyribose 5'-phosphate)-2'-deoxyribonucleotide-DNA = a 3'-end 2'-deoxyribonucleotide-(2,3-dehydro-2,3-deoxyribose 5'-phosphate)-DNA + a 5'-end 5'-phospho-2'-deoxyribonucleoside-DNA + H(+). Functionally, involved in base excision repair of DNA damaged by oxidation or by mutagenic agents. Acts as a DNA glycosylase that recognizes and removes damaged bases. Has a preference for oxidized purines, such as 7,8-dihydro-8-oxoguanine (8-oxoG). Has AP (apurinic/apyrimidinic) lyase activity and introduces nicks in the DNA strand. Cleaves the DNA backbone by beta-delta elimination to generate a single-strand break at the site of the removed base with both 3'- and 5'-phosphates. This Laribacter hongkongensis (strain HLHK9) protein is Formamidopyrimidine-DNA glycosylase.